A 389-amino-acid polypeptide reads, in one-letter code: RHOMBOID-like protein 1 (389 aa).

The next 7 membrane-spanning stretches (helical) occupy residues 56–76 (PWLVPAIVVANIALFAISMFI), 136–156 (IWLHAGVFHVLANMLSLIFIG), 163–183 (FGFVRIGLLYMISGFGGSLLS), 191–211 (ISVGASGALFGLLGAMLSELL), 221–241 (FAALLTLIFIIAINLAVGILP), 244–264 (DNFAHLGGFTSGFLLGFVFLI), and 295–315 (VLWITSLVLLIAGYTAGLVVL). Residue serine 196 is the Nucleophile of the active site. Histidine 248 (charge relay system) is an active-site residue.

The protein belongs to the peptidase S54 family. Expressed in roots, seedlings, leaves, stems and flowers.

Its subcellular location is the golgi apparatus membrane. The catalysed reaction is Cleaves type-1 transmembrane domains using a catalytic dyad composed of serine and histidine that are contributed by different transmembrane domains.. Functionally, probable rhomboid-type serine protease that catalyzes intramembrane proteolysis. Unable to cleave the Drosophila protein Spitz. This Arabidopsis thaliana (Mouse-ear cress) protein is RHOMBOID-like protein 1.